The following is an 872-amino-acid chain: DNA mismatch repair protein MutS (872 aa).

626–633 (GPNMAGKS) is an ATP binding site.

Belongs to the DNA mismatch repair MutS family.

Its function is as follows. This protein is involved in the repair of mismatches in DNA. It is possible that it carries out the mismatch recognition step. This protein has a weak ATPase activity. The sequence is that of DNA mismatch repair protein MutS from Chlorobium phaeobacteroides (strain DSM 266 / SMG 266 / 2430).